The primary structure comprises 251 residues: uncharacterized protein (251 aa).

Residue Thr-12–Gly-21 coordinates NADP(+). Substrate is bound at residue Ser-148. The Proton acceptor role is filled by Tyr-161.

This sequence belongs to the short-chain dehydrogenases/reductases (SDR) family.

This is an uncharacterized protein from Bacillus subtilis (strain 168).